Reading from the N-terminus, the 434-residue chain is Histidinol dehydrogenase (434 aa).

3 residues coordinate NAD(+): Tyr-130, Gln-188, and Asn-211. Substrate-binding residues include Ser-237, Gln-259, and His-262. Zn(2+)-binding residues include Gln-259 and His-262. Residues Glu-326 and His-327 each act as proton acceptor in the active site. The substrate site is built by His-327, Asp-360, Glu-414, and His-419. Position 360 (Asp-360) interacts with Zn(2+). His-419 contacts Zn(2+).

It belongs to the histidinol dehydrogenase family. As to quaternary structure, homodimer. The cofactor is Zn(2+).

It carries out the reaction L-histidinol + 2 NAD(+) + H2O = L-histidine + 2 NADH + 3 H(+). The protein operates within amino-acid biosynthesis; L-histidine biosynthesis; L-histidine from 5-phospho-alpha-D-ribose 1-diphosphate: step 9/9. Functionally, catalyzes the sequential NAD-dependent oxidations of L-histidinol to L-histidinaldehyde and then to L-histidine. The chain is Histidinol dehydrogenase from Shigella flexneri.